We begin with the raw amino-acid sequence, 346 residues long: Methylthioribose-1-phosphate isomerase (346 aa).

Substrate-binding positions include 46 to 48 (RGA), R89, and Q196. The active-site Proton donor is the D237. 247–248 (NK) contributes to the substrate binding site.

Belongs to the eIF-2B alpha/beta/delta subunits family. MtnA subfamily.

It carries out the reaction 5-(methylsulfanyl)-alpha-D-ribose 1-phosphate = 5-(methylsulfanyl)-D-ribulose 1-phosphate. The protein operates within amino-acid biosynthesis; L-methionine biosynthesis via salvage pathway; L-methionine from S-methyl-5-thio-alpha-D-ribose 1-phosphate: step 1/6. Functionally, catalyzes the interconversion of methylthioribose-1-phosphate (MTR-1-P) into methylthioribulose-1-phosphate (MTRu-1-P). The polypeptide is Methylthioribose-1-phosphate isomerase (Geobacter metallireducens (strain ATCC 53774 / DSM 7210 / GS-15)).